The primary structure comprises 211 residues: uncharacterized protein (211 aa).

This is an uncharacterized protein from Mycoplasma pneumoniae (strain ATCC 29342 / M129 / Subtype 1) (Mycoplasmoides pneumoniae).